The following is a 224-amino-acid chain: tRNA (guanine-N(7)-)-methyltransferase (224 aa).

S-adenosyl-L-methionine is bound by residues Glu-52, Asp-77, and Asp-126. The active site involves Asp-126. Substrate contacts are provided by Lys-130 and Asp-162.

It belongs to the class I-like SAM-binding methyltransferase superfamily. TrmB family.

It carries out the reaction guanosine(46) in tRNA + S-adenosyl-L-methionine = N(7)-methylguanosine(46) in tRNA + S-adenosyl-L-homocysteine. The protein operates within tRNA modification; N(7)-methylguanine-tRNA biosynthesis. Functionally, catalyzes the formation of N(7)-methylguanine at position 46 (m7G46) in tRNA. This is tRNA (guanine-N(7)-)-methyltransferase from Christiangramia forsetii (strain DSM 17595 / CGMCC 1.15422 / KT0803) (Gramella forsetii).